A 583-amino-acid chain; its full sequence is Phytoene desaturase (583 aa).

An N-terminal signal peptide occupies residues 1-20; sequence MAPPKHVIIIGAGAGGTATA. A helical membrane pass occupies residues 531-551; that stretch reads IIWFLLIALFAATLVLFIAFP.

The protein belongs to the carotenoid/retinoid oxidoreductase family. It depends on NAD(+) as a cofactor.

It localises to the membrane. The catalysed reaction is 15-cis-phytoene + 5 A = all-trans-3,4-didehydrolycopene + 5 AH2. Its pathway is carotenoid biosynthesis; lycopene biosynthesis. Its function is as follows. Phytoene desaturase involved in the carotenoid biosynthesis pathway. Converts phytoene into 3,4-didehydrolycopene via the intermediary of phytofluene, zeta-carotene, neurosporene and lycopene, by introducing up to five double bonds into phytoene. In Phycomyces blakesleeanus (strain ATCC 8743b / DSM 1359 / FGSC 10004 / NBRC 33097 / NRRL 1555), this protein is Phytoene desaturase (carB).